A 196-amino-acid polypeptide reads, in one-letter code: DnaA initiator-associating protein DiaA (196 aa).

The region spanning 34–196 (LVHSLLNGNK…DNTLFLHQDD (163 aa)) is the SIS domain.

This sequence belongs to the SIS family. DiaA subfamily. In terms of assembly, homotetramer; dimer of dimers.

In terms of biological role, required for the timely initiation of chromosomal replication via direct interactions with the DnaA initiator protein. This chain is DnaA initiator-associating protein DiaA, found in Salmonella paratyphi A (strain ATCC 9150 / SARB42).